The following is a 631-amino-acid chain: Phosphomethylpyrimidine synthase (631 aa).

Substrate is bound by residues asparagine 239, methionine 268, tyrosine 297, histidine 333, serine 353–glycine 355, aspartate 394–arginine 397, and glutamate 433. Position 437 (histidine 437) interacts with Zn(2+). Tyrosine 460 lines the substrate pocket. Zn(2+) is bound at residue histidine 501. The [4Fe-4S] cluster site is built by cysteine 581, cysteine 584, and cysteine 589.

This sequence belongs to the ThiC family. In terms of assembly, homodimer. The cofactor is [4Fe-4S] cluster.

The enzyme catalyses 5-amino-1-(5-phospho-beta-D-ribosyl)imidazole + S-adenosyl-L-methionine = 4-amino-2-methyl-5-(phosphooxymethyl)pyrimidine + CO + 5'-deoxyadenosine + formate + L-methionine + 3 H(+). It functions in the pathway cofactor biosynthesis; thiamine diphosphate biosynthesis. Catalyzes the synthesis of the hydroxymethylpyrimidine phosphate (HMP-P) moiety of thiamine from aminoimidazole ribotide (AIR) in a radical S-adenosyl-L-methionine (SAM)-dependent reaction. In Escherichia fergusonii (strain ATCC 35469 / DSM 13698 / CCUG 18766 / IAM 14443 / JCM 21226 / LMG 7866 / NBRC 102419 / NCTC 12128 / CDC 0568-73), this protein is Phosphomethylpyrimidine synthase.